A 79-amino-acid chain; its full sequence is Quinohemoprotein amine dehydrogenase subunit gamma (79 aa).

The segment at residues 7–16 (CTATTDPGWE) is a cross-link (4-cysteinyl-glutamic acid (Cys-Glu)). Cross-links (3-cysteinyl-aspartic acid (Cys-Asp)) lie at residues 27–33 (CQPMEAD) and 41–49 (CWWPAQVPD). Catalysis depends on D33, which acts as the Proton acceptor. The segment at residues 37–43 (CSDPCWW) is a cross-link (4'-cysteinyl-tryptophylquinone (Cys-Trp)). W43 bears the Tryptophylquinone mark.

This sequence belongs to the quinohemoprotein amine dehydrogenase subunit gamma family. Heterotrimer of an alpha, a beta and a gamma subunit. Requires cysteine tryptophylquinone residue as cofactor. Post-translationally, the cysteine tryptophylquinone (CTQ) is generated by oxidation of the indole ring of a tryptophan residue to form tryptophylquinone, followed by covalent cross-linking with a cysteine residue.

It localises to the periplasm. The enzyme catalyses an aliphatic amine + A + H2O = an aldehyde + AH2 + NH4(+). Catalyzes the oxidative deamination of a wide range of aliphatic monoamines and diamines. The physiological electron acceptor is an azurin-like blue protein. In Pseudomonas putida (strain ATCC 47054 / DSM 6125 / CFBP 8728 / NCIMB 11950 / KT2440), this protein is Quinohemoprotein amine dehydrogenase subunit gamma (qhnDH).